The chain runs to 300 residues: Ribosomal RNA small subunit methyltransferase H (300 aa).

Residues 46–48, aspartate 65, phenylalanine 92, aspartate 107, and glutamine 114 contribute to the S-adenosyl-L-methionine site; that span reads GGH.

The protein belongs to the methyltransferase superfamily. RsmH family.

Its subcellular location is the cytoplasm. It carries out the reaction cytidine(1402) in 16S rRNA + S-adenosyl-L-methionine = N(4)-methylcytidine(1402) in 16S rRNA + S-adenosyl-L-homocysteine + H(+). Functionally, specifically methylates the N4 position of cytidine in position 1402 (C1402) of 16S rRNA. In Prochlorococcus marinus subsp. pastoris (strain CCMP1986 / NIES-2087 / MED4), this protein is Ribosomal RNA small subunit methyltransferase H.